The sequence spans 380 residues: MPASPQSSEMFIGLMSGTSMDGADGVLVDFSGAQPAVLAAAHTPFPAPLREAFGALQQPGDDEIHREALASNGLARVYADCVATLLRTASVTADRVAAIGAHGQTIRHRPGQYDGTGYTRQSQHPALLAELTGIDVVADFRSRDVAAGGQGAPLVPAVHAALFGAADETRVVCNIGGISNISILPAAGTGRPVTGFDCGPGNALLDDWIHRHRGTPYDDGGAWAASGKVDESLLDQMLAEPYFRALPPKSTGRDLFHPGWLQSLLDTYGNAQPQPVDIQATLATLTATAIAQDVQRYAPEARRLIVCGGGAHNDFVMTTMANQLPGVLVQTTGDFGVPVSQVEAIAFAWLARQCTRRAPGNVATVTGAAGPRVLGAIYPR.

ATP is bound at residue 17–24; that stretch reads GTSMDGAD.

This sequence belongs to the anhydro-N-acetylmuramic acid kinase family.

The catalysed reaction is 1,6-anhydro-N-acetyl-beta-muramate + ATP + H2O = N-acetyl-D-muramate 6-phosphate + ADP + H(+). Its pathway is amino-sugar metabolism; 1,6-anhydro-N-acetylmuramate degradation. The protein operates within cell wall biogenesis; peptidoglycan recycling. Its function is as follows. Catalyzes the specific phosphorylation of 1,6-anhydro-N-acetylmuramic acid (anhMurNAc) with the simultaneous cleavage of the 1,6-anhydro ring, generating MurNAc-6-P. Is required for the utilization of anhMurNAc either imported from the medium or derived from its own cell wall murein, and thus plays a role in cell wall recycling. This chain is Anhydro-N-acetylmuramic acid kinase, found in Cupriavidus metallidurans (strain ATCC 43123 / DSM 2839 / NBRC 102507 / CH34) (Ralstonia metallidurans).